The following is a 139-amino-acid chain: Trafficking protein particle complex subunit 2-like protein (139 aa).

This sequence belongs to the TRAPP small subunits family. Sedlin subfamily.

Its subcellular location is the cytoplasm. The protein localises to the perinuclear region. It is found in the endoplasmic reticulum. The protein resides in the golgi apparatus. Functionally, may play a role in vesicular transport from endoplasmic reticulum to Golgi. In Xenopus tropicalis (Western clawed frog), this protein is Trafficking protein particle complex subunit 2-like protein (trappc2l).